We begin with the raw amino-acid sequence, 487 residues long: Cyclic AMP-dependent transcription factor ATF-2 (487 aa).

The C2H2-type zinc finger occupies 7 to 31 (FLCTAPGCGQRFTNEDHLAVHKHKH). A Phosphothreonine; by PKC/PRKCH modification is found at T34. At S44 the chain carries Phosphoserine. Position 51 is a phosphothreonine; by MAPK11 and MAPK14 (T51). T53 carries the phosphothreonine; by MAPK1, MAPK3, MAPK11, MAPK12, MAPK14 and PLK3 modification. Phosphothreonine; by VRK1 is present on T55. Phosphoserine occurs at positions 72 and 94. T98 is modified (phosphothreonine). Position 103 is a phosphoserine; by PKC/PRKCA and PKC/PRKCB (S103). Disordered regions lie at residues 106–137 (EEPS…PLAQ) and 241–355 (PGIP…RQKR). Phosphoserine is present on S118. The span at 264 to 275 (LTQQHPPVTNGD) shows a compositional bias: polar residues. The interval 278-281 (KGHG) is essential for its histone acetyltransferase activity. A compositionally biased stretch (low complexity) spans 300 to 316 (PATSTTETPASPAHTTP). Residue S310 is modified to Phosphoserine. Residue S322 is modified to Phosphoserine; by PKC/PRKCA and PKC/PRKCB. Residues 328–345 (AANEDPDEKRRKFLERNR) are compositionally biased toward basic and acidic residues. Residues 334 to 397 (DEKRRKFLER…AQLKQLLLAH (64 aa)) form the bZIP domain. The interval 336–356 (KRRKFLERNRAAASRCRQKRK) is basic motif. K339 carries the post-translational modification N6-acetyllysine. S349 bears the Phosphoserine; by PKC/PRKCA and PKC/PRKCB mark. K356 is modified (N6-acetyllysine). The leucine-zipper stretch occupies residues 362 to 390 (LEKKAEDLSSLNGQLQSEVTLLRNEVAQL). Residues 387 to 396 (VAQLKQLLLA) carry the Nuclear export signal motif. Residues 407–453 (KKSGYHTADKDDSSEDLSVPSSPHTEAIQHSSVSTSNGVSSTSKAEA) form a disordered region. Residues S424 and S428 each carry the phosphoserine modification. The segment covering 425 to 436 (VPSSPHTEAIQH) has biased composition (polar residues). Residues 437-449 (SSVSTSNGVSSTS) are compositionally biased toward low complexity. Residues S472 and S480 each carry the phosphoserine; by ATM modification.

The protein belongs to the bZIP family. ATF subfamily. Binds DNA as a dimer and can form a homodimer in the absence of DNA. Can form a heterodimer with JUN. Heterodimerization is essential for its transcriptional activity. Interacts with SMAD3 and SMAD4. Interacts with the HK1/VDAC1 complex. Interacts with NBN, MRE11, XPO1, KAT5 and CUL3. Binds through its N-terminal region to UTF1 which acts as a coactivator of ATF2 transcriptional activity. Phosphorylation of Thr-51 by MAPK14 and MAPK11, and at Thr-53 by MAPK1/ERK2, MAPK3/ERK1, MAPK11, MAPK12 and MAPK14 in response to external stimulus like insulin causes increased transcriptional activity. Phosphorylated by PLK3 following hyperosmotic stress. Also phosphorylated and activated by JNK and CaMK4. ATM-mediated phosphorylation at Ser-472 and Ser-480 stimulates its function in DNA damage response. Phosphorylation at Ser-44, Thr-55 and Ser-103 activates its transcriptional activity. Phosphorylation at Thr-51 or Thr-53 enhances acetylation of histones H2B and H4.

It is found in the nucleus. The protein localises to the cytoplasm. Its subcellular location is the mitochondrion outer membrane. In terms of biological role, transcriptional activator which regulates the transcription of various genes, including those involved in anti-apoptosis, cell growth, and DNA damage response. Dependent on its binding partner, binds to CRE (cAMP response element) consensus sequences (5'-TGACGTCA-3') or to AP-1 (activator protein 1) consensus sequences (5'-TGACTCA-3'). In the nucleus, contributes to global transcription and the DNA damage response, in addition to specific transcriptional activities that are related to cell development, proliferation and death. In the cytoplasm, interacts with and perturbs HK1- and VDAC1-containing complexes at the mitochondrial outer membrane, thereby impairing mitochondrial membrane potential, inducing mitochondrial leakage and promoting cell death. The phosphorylated form (mediated by ATM) plays a role in the DNA damage response and is involved in the ionizing radiation (IR)-induced S phase checkpoint control and in the recruitment of the MRN complex into the IR-induced foci (IRIF). Exhibits histone acetyltransferase (HAT) activity which specifically acetylates histones H2B and H4 in vitro. In concert with CUL3 and RBX1, promotes the degradation of KAT5 thereby attenuating its ability to acetylate and activate ATM. Can elicit oncogenic or tumor suppressor activities depending on the tissue or cell type. In Mus musculus (Mouse), this protein is Cyclic AMP-dependent transcription factor ATF-2 (Atf2).